The following is an 824-amino-acid chain: Type IV secretion system protein PtlC (824 aa).

456–463 (GQSGSGKT) provides a ligand contact to ATP.

It belongs to the TrbE/VirB4 family.

The protein resides in the cell membrane. Functionally, component of the type IV secretion system ptl essential for secretion of assembled pertussis toxin (PTX) through the outer membrane. The sequence is that of Type IV secretion system protein PtlC (ptlC) from Bordetella pertussis (strain Tohama I / ATCC BAA-589 / NCTC 13251).